Here is a 589-residue protein sequence, read N- to C-terminus: MTKKLTPQEKQNRKPAVRACVFCHQKHLQCSNERPCKNCVKRNIGHECRDIVRKRVQYLTGNGKGSSSKTKTPRKKLKSTPITASSPSVASTISPLPIDAGLKQEFSTPNEIPMSEPSLTNQPLSMSPLNPQGANNITNNFNSHATSQQIKEILEVPPHVNSMMNNSGLNTNVSLTPETLMIPDHLQFHTTTMLNTTNDVLNKLLTDQFETESLISANNSNNTSHNDNFIAQNNNNNPEPSNLHNRHQFSSNYLNEEYLMLGDILLHSKPVSPSPSNTSASEYNTNTLSPTNFGFIQNIDFEGFNQPKKKVAKKLKESRPFISLGYTDDSTLRLNHAPEANGQTEDLLDHNKDDSRKNPGNGNSIINFETKYVKDYVAPFITNGLYQSVKDIYSYQIINYEYPDSYHALTKFLKERFGGNDLSIDERKEKRSKLLVILKLIASYRPTFIAAHKSLLKPQDLLFLEMSLQRSLLDYKKLVELSSSPSIMWRRTGEIIYITEEMGLLLGYSPIEILEKRFFLFSLMPDEEIIRYFKFFKNIAVNDLQSSISIKVKLINKEGRLVEFCSVYTIKRDIFDIPMLIVGQFLPVM.

The zn(2)-C6 fungal-type DNA-binding region spans 20 to 48; it reads CVFCHQKHLQCSNERPCKNCVKRNIGHEC. Disordered stretches follow at residues 59-90, 218-240, and 340-362; these read LTGN…PSVA, NNSN…NPEP, and ANGQ…PGNG. The segment covering 80–90 has biased composition (polar residues); the sequence is TPITASSPSVA. A compositionally biased stretch (basic and acidic residues) spans 347-357; it reads LLDHNKDDSRK. Residues 471-542 enclose the PAS domain; it reads SLLDYKKLVE…FKFFKNIAVN (72 aa).

Belongs to the ERT1/acuK family.

Its subcellular location is the nucleus. Its function is as follows. Transcription factor which regulates nonfermentable carbon utilization. The protein is Glucose starvation modulator protein 1 (GSM1) of Candida tropicalis (strain ATCC MYA-3404 / T1) (Yeast).